The following is a 430-amino-acid chain: Protein arginine methyltransferase NDUFAF7, mitochondrial (430 aa).

The N-terminal 31 residues, 1-31, are a transit peptide targeting the mitochondrion; sequence MSGLARLRKTAFLMVSASANCRIQRYQSSRT.

This sequence belongs to the NDUFAF7 family.

Its subcellular location is the mitochondrion. It carries out the reaction L-arginyl-[protein] + 2 S-adenosyl-L-methionine = N(omega),N(omega)'-dimethyl-L-arginyl-[protein] + 2 S-adenosyl-L-homocysteine + 2 H(+). Functionally, arginine methyltransferase involved in the assembly or stability of mitochondrial NADH:ubiquinone oxidoreductase complex (complex I). Acts by mediating symmetric dimethylation of 'Arg-118' of ndufs2 after it assembles into the complex I, stabilizing the early intermediate complex. This chain is Protein arginine methyltransferase NDUFAF7, mitochondrial, found in Xenopus tropicalis (Western clawed frog).